The primary structure comprises 593 residues: MTSRRWFHPNITGVEAENLLLTRGVDGSFLARPSKSNPGDFTLSVRRNGAVTHIKIQNTGDYYDLYGGEKFATLAELVQYYMEHHGQLKEKNGDVIELKYPLNCADPTSERWFHGHLSGKEAEKLLTEKGKHGSFLVRESQSHPGDFVLSVRTGDDKGESNDSKSKVTHVMIRCQELKYDVGGGERFDSLTDLVEHYKKNPMVETLGTVLQLKQPLNTTRINAAEIESRVRELSKLAETTDKVKQGFWEEFETLQQQECKLLYSRKEGQRQENKNKNRYKNILPFDHTRVVLHDGDPNEPVSDYINANIIMPEFETKCNNSKPKKSYIATQGCLQNTVNDFWRMVFQENSRVIVMTTKEVERGKSKCVKYWPDECALKEYGVMRVRNVRESAAHDYTLRELKLSKVGQGNTERTVWQYHFRTWPDHGVPSDPGGVLDFLEEVHHKQESIVDAGPVVVHCSAGIGRTGTFIVIDILIDIIREKGVDCDIDVPKTIQMVRSQRSGMVQTEAQYRFIYMAVQHYIETLQRRIEEEQKSKRKGHEYTNIKYSLVDQTSGDQSPLPPCTPTPPCAEMREDSARVYENVGLMQQQRSFR.

Residue threonine 2 is modified to N-acetylthreonine. SH2 domains follow at residues 6-102 (WFHP…KYPL) and 112-216 (WFHG…KQPL). A phosphotyrosine mark is found at tyrosine 62 and tyrosine 66. The Tyrosine-protein phosphatase domain maps to 247–517 (FWEEFETLQQ…EAQYRFIYMA (271 aa)). Substrate is bound by residues aspartate 425, 459–465 (CSAGIGR), and glutamine 506. Cysteine 459 acts as the Phosphocysteine intermediate in catalysis. 2 positions are modified to phosphotyrosine; by PDGFR: tyrosine 542 and tyrosine 580.

It belongs to the protein-tyrosine phosphatase family. Non-receptor class 2 subfamily. Interacts with phosphorylated SIT1, LIME1, BCAR3 and MZPL1. Interacts with FCRL4, FCRL6, ANKHD1, SHB, INPP5D/SHIP1 and CD84. Interacts with MILR1 (tyrosine-phosphorylated). Interacts with FLT1 (tyrosine-phosphorylated), FLT3 (tyrosine-phosphorylated), FLT4 (tyrosine-phosphorylated), KIT and GRB2. Interacts with PTPNS1. Interacts with KIR2DL1; the interaction is enhanced by ARRB2. Interacts (via SH2 domain) with TEK/TIE2 (tyrosine phosphorylated). Interacts with GAB2. Interacts with TERT; the interaction retains TERT in the nucleus. Interacts with PECAM1 and FER. Interacts with EPHA2 (activated); participates in PTK2/FAK1 dephosphorylation in EPHA2 downstream signaling. Interacts with PDGFRA (tyrosine phosphorylated). Interacts with PDGFRB (tyrosine phosphorylated); this interaction increases the PTPN11 phosphatase activity. Interacts with ROS1; this mediates PTPN11 phosphorylation. Interacts with CEACAM1 (via cytoplasmic domain); this interaction depends on the monomer/dimer equilibrium and is phosphorylation-dependent. Interacts with MPIG6B (via ITIM motif). Interacts with SIGLEC10. Interacts with CLEC12B (via ITIM motif); this interaction triggers dephosphorylation and activation of PTPN11. Interacts (via SH2 domains) with NEDD9/CAS-L; the interaction is enhanced when NEDD9/CAS-L is tyrosine phosphorylated. In terms of processing, phosphorylated on Tyr-542 and Tyr-580 upon receptor protein tyrosine kinase activation; which creates a binding site for GRB2 and other SH2-containing proteins. Phosphorylated upon activation of the receptor-type kinase FLT3. Phosphorylated upon activation of the receptor-type kinase PDGFRA. Phosphorylated by activated PDGFRB. In terms of tissue distribution, expressed in brain, muscle and lung.

The protein resides in the cytoplasm. The enzyme catalyses O-phospho-L-tyrosyl-[protein] + H2O = L-tyrosyl-[protein] + phosphate. Inhibited by orthovanadate, molybdate and spermidine. Acts downstream of various receptor and cytoplasmic protein tyrosine kinases to participate in the signal transduction from the cell surface to the nucleus. Positively regulates MAPK signal transduction pathway. Dephosphorylates GAB1, ARHGAP35 and EGFR. Dephosphorylates ROCK2 at 'Tyr-722' resulting in stimulation of its RhoA binding activity. Dephosphorylates CDC73. Dephosphorylates SOX9 on tyrosine residues, leading to inactivate SOX9 and promote ossification. Dephosphorylates tyrosine-phosphorylated NEDD9/CAS-L. This Rattus norvegicus (Rat) protein is Tyrosine-protein phosphatase non-receptor type 11 (Ptpn11).